We begin with the raw amino-acid sequence, 224 residues long: PKHD-type hydroxylase tll1907 (224 aa).

Positions 77 to 176 (KIIGPLLFSR…RLVAVAWVQS (100 aa)) constitute a Fe2OG dioxygenase domain. Fe cation is bound by residues His96, Asp98, and His157. Arg167 contributes to the 2-oxoglutarate binding site.

Fe(2+) is required as a cofactor. Requires L-ascorbate as cofactor.

The sequence is that of PKHD-type hydroxylase tll1907 from Thermosynechococcus vestitus (strain NIES-2133 / IAM M-273 / BP-1).